The chain runs to 246 residues: tRNA pseudouridine synthase A (246 aa).

Asp-52 functions as the Nucleophile in the catalytic mechanism. Tyr-111 contacts substrate.

It belongs to the tRNA pseudouridine synthase TruA family. As to quaternary structure, homodimer.

It catalyses the reaction uridine(38/39/40) in tRNA = pseudouridine(38/39/40) in tRNA. Formation of pseudouridine at positions 38, 39 and 40 in the anticodon stem and loop of transfer RNAs. The chain is tRNA pseudouridine synthase A from Parvibaculum lavamentivorans (strain DS-1 / DSM 13023 / NCIMB 13966).